Consider the following 1181-residue polypeptide: Sodium/potassium/calcium exchanger 1 (1181 aa).

Residues 1 to 419 (MGKLIRMGTQ…DLFSVEDRRQ (419 aa)) lie on the Extracellular side of the membrane. Disordered stretches follow at residues 107 to 232 (AMED…TSLK), 255 to 276 (SLVG…STTP), and 300 to 323 (STPA…GTST). Residues 124–136 (SLKNNYSPTTAGT) show a composition bias toward polar residues. A glycan (N-linked (GlcNAc...) asparagine) is linked at N271. A compositionally biased stretch (polar residues) spans 301–311 (TPATTEGSTAA). The helical transmembrane segment at 420–440 (GWVVLHIFGMTYVFVALAIVC) threads the bilayer. Residues 441–464 (DEYFVPALGVITDKLQISEDVAGA) lie on the Cytoplasmic side of the membrane. The stretch at 461 to 501 (VAGATFMAAGGSAPELFTSLIGVFISHSNVGIGTIVGSAVF) is one Alpha-1 repeat. A helical membrane pass occupies residues 465–485 (TFMAAGGSAPELFTSLIGVFI). At 486-491 (SHSNVG) the chain is on the extracellular side. The chain crosses the membrane as a helical span at residues 492-512 (IGTIVGSAVFNILFVIGTCAL). Over 513–519 (FSREILN) the chain is Cytoplasmic. The chain crosses the membrane as a helical span at residues 520–544 (LTWWPLFRDVSFYILDLSMLIVFFL). Topologically, residues 545–552 (DSLIAWWE) are extracellular. The chain crosses the membrane as a helical span at residues 553–569 (SLLLLLAYALYVFTMKW). Residues 570–989 (NKQIERWVKE…SLEWPESRQK (420 aa)) lie on the Cytoplasmic side of the membrane. Residues 598–617 (PSDGAIEENEQQDNKKLKLP) are disordered. A Phosphoserine modification is found at S625. The interval 650–983 (GEARPSKDKQ…ESEEPLSLEW (334 aa)) is disordered. T690 is subject to Phosphothreonine. Over residues 701 to 715 (GDQEEDPGCQEDVDE) the composition is skewed to acidic residues. 14 consecutive repeat copies span residues 730–741 (ETEAEGKKDEEG), 742–754 (ETEA…GQEE), 755–766 (ETETKGKEKQEG), 767–778 (ETESEGKDEQEG), 779–791 (ETEA…DHEG), 792–804 (ETEA…EHEG), 805–817 (ETEA…EQEG), 818–830 (ETEA…EQEG), 831–843 (ETEA…EHEV), 844–856 (ETEA…NHEG), 857–869 (ETEA…DHEG), 870–881 (ETEAEGNVEHQG), 882–893 (ETEAEGKVEHEG), and 894–905 (ETEAGEKDEHEG). 3 stretches are compositionally biased toward basic and acidic residues: residues 730–750 (ETEA…RKED), 757–775 (ETKG…GKDE), and 782–805 (AEGK…HEGE). Residues 730–905 (ETEAEGKKDE…EAGEKDEHEG (176 aa)) form a 14 X approximate tandem repeats region. Over residues 806–820 (TEAEGTEDEQEGETE) the composition is skewed to acidic residues. Over residues 834-906 (AEGKEVEHEV…AGEKDEHEGQ (73 aa)) the composition is skewed to basic and acidic residues. 2 stretches are compositionally biased toward acidic residues: residues 921–931 (GEAEANAEDQC) and 949–979 (GDSE…EEPL). A helical membrane pass occupies residues 990 to 1010 (QAIYLFLLPIVFPLWLTIPDV). Over 1011-1017 (RRQEARK) the chain is Extracellular. The chain crosses the membrane as a helical span at residues 1018–1038 (FFVITFLGSIIWIAMFSYLMV). Residues 1039–1053 (WWAHQVGETIGISEE) are Cytoplasmic-facing. A helical membrane pass occupies residues 1054 to 1074 (IMGLTILAAGTSIPDLITSVI). The Alpha-2 repeat unit spans residues 1061 to 1092 (AAGTSIPDLITSVIVARKGLGDMAVSSSVGSN). Topologically, residues 1075–1092 (VARKGLGDMAVSSSVGSN) are extracellular. A helical membrane pass occupies residues 1093 to 1113 (IFDITVGLPVPWLLFSLINAL). The Cytoplasmic portion of the chain corresponds to 1114–1121 (QPIPVSSN). Residues 1122–1142 (GLFCAIVLLFLMLLFVIFSIA) traverse the membrane as a helical segment. At 1143–1150 (SCKWRMNK) the chain is on the extracellular side. The chain crosses the membrane as a helical span at residues 1151–1171 (ILGFTMFLLYFVFLVISVMLE). Residues 1172 to 1181 (DRIISCPVSV) are Cytoplasmic-facing.

This sequence belongs to the Ca(2+):cation antiporter (CaCA) (TC 2.A.19) family. SLC24A subfamily. Post-translationally, the uncleaved signal sequence is required for efficient membrane targeting and proper membrane integration and topology. Highly expressed in the eye.

The protein localises to the cell membrane. It carries out the reaction Ca(2+)(out) + K(+)(out) + 4 Na(+)(in) = Ca(2+)(in) + K(+)(in) + 4 Na(+)(out). Calcium, potassium:sodium antiporter that transports 1 Ca(2+) and 1 K(+) in exchange for 4 Na(+). Critical component of the visual transduction cascade, controlling the calcium concentration of outer segments during light and darkness. Light causes a rapid lowering of cytosolic free calcium in the outer segment of both retinal rod and cone photoreceptors and the light-induced lowering of calcium is caused by extrusion via this protein which plays a key role in the process of light adaptation. This chain is Sodium/potassium/calcium exchanger 1 (Slc24a1), found in Rattus norvegicus (Rat).